The chain runs to 122 residues: Small ribosomal subunit protein bS6 (122 aa).

The segment at 95–122 (AETAPSPMMKEVQREEAKKAAAQSEQAA) is disordered.

Belongs to the bacterial ribosomal protein bS6 family.

In terms of biological role, binds together with bS18 to 16S ribosomal RNA. The sequence is that of Small ribosomal subunit protein bS6 from Ralstonia nicotianae (strain ATCC BAA-1114 / GMI1000) (Ralstonia solanacearum).